Reading from the N-terminus, the 231-residue chain is Small ribosomal subunit protein uS3 (231 aa).

Residues 17-86 (VEKYLTKELK…SPQIEVQQVQ (70 aa)) enclose the KH type-2 domain.

The protein belongs to the universal ribosomal protein uS3 family. In terms of assembly, part of the 30S ribosomal subunit.

Its function is as follows. Binds the lower part of the 30S subunit head. In Methanoregula boonei (strain DSM 21154 / JCM 14090 / 6A8), this protein is Small ribosomal subunit protein uS3.